The sequence spans 210 residues: Outer-membrane lipoprotein LolB (210 aa).

The signal sequence occupies residues 1 to 18; that stretch reads MKKFTKILSLSTLLFLAG. The N-palmitoyl cysteine moiety is linked to residue Cys19. Cys19 carries S-diacylglycerol cysteine lipidation.

The protein belongs to the LolB family. In terms of assembly, monomer.

It is found in the cell outer membrane. Its function is as follows. Plays a critical role in the incorporation of lipoproteins in the outer membrane after they are released by the LolA protein. This is Outer-membrane lipoprotein LolB from Actinobacillus pleuropneumoniae serotype 7 (strain AP76).